We begin with the raw amino-acid sequence, 1356 residues long: Vascular endothelial growth factor receptor 2 (1356 aa).

A signal peptide spans methionine 1–alanine 19. Residues alanine 20–glutamate 764 are Extracellular-facing. Asparagine 46, asparagine 66, asparagine 96, asparagine 143, asparagine 158, and asparagine 245 each carry an N-linked (GlcNAc...) asparagine glycan. Ig-like C2-type domains follow at residues asparagine 46–leucine 110, asparagine 141–glutamate 207, tyrosine 224–threonine 320, proline 328–serine 414, proline 421–threonine 548, proline 551–threonine 660, and proline 667–isoleucine 753. Residues cysteine 53 and cysteine 103 are joined by a disulfide bond. Cysteine 150 and cysteine 200 are oxidised to a cystine. Cysteine 246 and cysteine 307 are disulfide-bonded. N-linked (GlcNAc...) asparagine glycans are attached at residues asparagine 318, asparagine 374, asparagine 395, asparagine 511, asparagine 523, asparagine 580, asparagine 613, asparagine 619, asparagine 631, asparagine 675, asparagine 704, and asparagine 721. Intrachain disulfides connect cysteine 445-cysteine 530 and cysteine 571-cysteine 642. Cysteine 688 and cysteine 737 are disulfide-bonded. A helical membrane pass occupies residues isoleucine 765–isoleucine 785. At leucine 786–valine 1356 the chain is on the cytoplasmic side. Tyrosine 801 is modified (phosphotyrosine). The Protein kinase domain occupies leucine 834 to asparagine 1162. ATP-binding positions include leucine 840–valine 848 and lysine 868. Residue tyrosine 951 is modified to Phosphotyrosine; by autocatalysis. Residues serine 982 and serine 984 each carry the phosphoserine modification. Tyrosine 996 carries the post-translational modification Phosphotyrosine; by autocatalysis. Cysteine 1024 and cysteine 1045 are disulfide-bonded. Aspartate 1028 serves as the catalytic Proton acceptor. Phosphotyrosine; by autocatalysis occurs at positions 1054, 1059, 1175, and 1214. A phosphoserine mark is found at serine 1231 and serine 1235. Residue threonine 1238 is modified to Phosphothreonine. The disordered stretch occupies residues aspartate 1274–valine 1318. Residues serine 1296–tyrosine 1309 show a composition bias toward polar residues. Phosphotyrosine; by autocatalysis is present on residues tyrosine 1305, tyrosine 1309, and tyrosine 1319.

It belongs to the protein kinase superfamily. Tyr protein kinase family. CSF-1/PDGF receptor subfamily. As to quaternary structure, homodimer in the presence of bound dimeric VEGFA, VEGFC or VEGFD ligands; monomeric in the absence of bound ligands. Can also form heterodimers with FLT1/VEGFR1 and KDR/VEGFR2. Interacts (tyrosine phosphorylated) with LFYN, NCK1, PLCG1. Interacts (tyrosine-phosphorylated active form preferentially) with DAB2IP (via C2 domain and active form preferentially); the interaction occurs at the late phase of VEGFA response and inhibits KDR/VEGFR2 activity. Interacts with SHBSH2D2A/TSAD, GRB2, MYOF, CBL and PDCD6. Interacts (via C-terminus domain) with ERN1 (via kinase domain); the interaction is facilitated in a XBP1 isoform 1- and vascular endothelial growth factor (VEGF)-dependent manner in endothelial cells. Interacts (via juxtamembrane region) with chaperone PDCL3 (via thioredoxin fold region); the interaction leads to increased KDR/VEGFR2 abundance through inhibition of its ubiquitination and degradation. Interacts (tyrosine phosphorylated) with CCDC88A/GIV (via SH2-like region); binding requires autophosphorylation of the KDR/VEGFR2 C-terminal region. Interacts with isoform 2 of BSG. Interacts with SLC31A1; this interaction is induced upon VEGFA stimulation leading to SLC31A1 and KDR subsequent co-internalization to early endosomes, thereby activating KDR downstream signaling in endothelial cells. (Microbial infection) Interacts with HIV-1 Tat. Post-translationally, N-glycosylated. Ubiquitinated. Tyrosine phosphorylation of the receptor promotes its poly-ubiquitination, leading to its degradation via the proteasome or lysosomal proteases. In terms of processing, autophosphorylated on tyrosine residues upon ligand binding. Autophosphorylation occurs in trans, i.e. one subunit of the dimeric receptor phosphorylates tyrosine residues on the other subunit. Phosphorylation at Tyr-951 is important for interaction with SH2D2A/TSAD and VEGFA-mediated reorganization of the actin cytoskeleton. Phosphorylation at Tyr-1175 is important for interaction with PLCG1 and SHB. Phosphorylation at Tyr-1214 is important for interaction with NCK1 and FYN. Dephosphorylated by PTPRB. Dephosphorylated by PTPRJ at Tyr-951, Tyr-996, Tyr-1054, Tyr-1059, Tyr-1175 and Tyr-1214. Post-translationally, the inhibitory disulfide bond between Cys-1024 and Cys-1045 may serve as a specific molecular switch for H(2)S-induced modification that regulates KDR/VEGFR2 function. As to expression, detected in cornea (at protein level). Widely expressed.

The protein localises to the cell junction. The protein resides in the endoplasmic reticulum. It is found in the cell membrane. Its subcellular location is the cytoplasm. It localises to the nucleus. The protein localises to the cytoplasmic vesicle. The protein resides in the early endosome. It is found in the secreted. The enzyme catalyses L-tyrosyl-[protein] + ATP = O-phospho-L-tyrosyl-[protein] + ADP + H(+). Its activity is regulated as follows. Present in an inactive conformation in the absence of bound ligand. Binding of VEGFA, VEGFC or VEGFD leads to dimerization and activation by autophosphorylation on tyrosine residues. Inhibited by the small molecule PTK inhibitor SU5614 ((3Z)-5-Chloro-3-[(3,5-dimethyl-1H-pyrrol-2-yl)methylene]-1,3-dihydro-2H-indol-2-one). May be regulated by hydrogen sulfide (H(2)S) levels via a H(2)S-sensitive intracellular disulfide bond. In terms of biological role, tyrosine-protein kinase that acts as a cell-surface receptor for VEGFA, VEGFC and VEGFD. Plays an essential role in the regulation of angiogenesis, vascular development, vascular permeability, and embryonic hematopoiesis. Promotes proliferation, survival, migration and differentiation of endothelial cells. Promotes reorganization of the actin cytoskeleton. Isoforms lacking a transmembrane domain, such as isoform 2 and isoform 3, may function as decoy receptors for VEGFA, VEGFC and/or VEGFD. Isoform 2 plays an important role as negative regulator of VEGFA- and VEGFC-mediated lymphangiogenesis by limiting the amount of free VEGFA and/or VEGFC and preventing their binding to FLT4. Modulates FLT1 and FLT4 signaling by forming heterodimers. Binding of vascular growth factors to isoform 1 leads to the activation of several signaling cascades. Activation of PLCG1 leads to the production of the cellular signaling molecules diacylglycerol and inositol 1,4,5-trisphosphate and the activation of protein kinase C. Mediates activation of MAPK1/ERK2, MAPK3/ERK1 and the MAP kinase signaling pathway, as well as of the AKT1 signaling pathway. Mediates phosphorylation of PIK3R1, the regulatory subunit of phosphatidylinositol 3-kinase, reorganization of the actin cytoskeleton and activation of PTK2/FAK1. Required for VEGFA-mediated induction of NOS2 and NOS3, leading to the production of the signaling molecule nitric oxide (NO) by endothelial cells. Phosphorylates PLCG1. Promotes phosphorylation of FYN, NCK1, NOS3, PIK3R1, PTK2/FAK1 and SRC. This is Vascular endothelial growth factor receptor 2 from Homo sapiens (Human).